A 367-amino-acid polypeptide reads, in one-letter code: Probable cinnamyl alcohol dehydrogenase (367 aa).

Cysteine 47 contributes to the Zn(2+) binding site. Threonine 49 serves as a coordination point for NADP(+). Residues histidine 69, glutamate 70, cysteine 100, cysteine 103, cysteine 106, cysteine 114, and cysteine 163 each coordinate Zn(2+). Residues threonine 167, 188 to 193 (GLGGVG), 211 to 216 (SSSSKK), threonine 251, glycine 275, and 298 to 300 (SFI) contribute to the NADP(+) site.

It belongs to the zinc-containing alcohol dehydrogenase family. As to quaternary structure, homodimer. Requires Zn(2+) as cofactor.

It catalyses the reaction (E)-cinnamyl alcohol + NADP(+) = (E)-cinnamaldehyde + NADPH + H(+). It carries out the reaction (E)-coniferol + NADP(+) = (E)-coniferaldehyde + NADPH + H(+). The catalysed reaction is (E)-sinapyl alcohol + NADP(+) = (E)-sinapaldehyde + NADPH + H(+). The enzyme catalyses (E)-4-coumaroyl alcohol + NADP(+) = (E)-4-coumaraldehyde + NADPH + H(+). It catalyses the reaction (E)-caffeyl alcohol + NADP(+) = (E)-caffeyl aldehyde + NADPH + H(+). Its pathway is aromatic compound metabolism; phenylpropanoid biosynthesis. Functionally, involved in lignin biosynthesis. May catalyze the final step specific for the production of lignin monomers, like coniferyl alcohol, sinapyl alcohol and 4-coumaryl alcohol. The chain is Probable cinnamyl alcohol dehydrogenase from Zea mays (Maize).